A 129-amino-acid polypeptide reads, in one-letter code: Small ribosomal subunit protein uS11 (129 aa).

It belongs to the universal ribosomal protein uS11 family. As to quaternary structure, part of the 30S ribosomal subunit. Interacts with proteins S7 and S18. Binds to IF-3.

Its function is as follows. Located on the platform of the 30S subunit, it bridges several disparate RNA helices of the 16S rRNA. Forms part of the Shine-Dalgarno cleft in the 70S ribosome. In Lacticaseibacillus casei (strain BL23) (Lactobacillus casei), this protein is Small ribosomal subunit protein uS11.